Reading from the N-terminus, the 386-residue chain is L-lactate dehydrogenase (386 aa).

Residues 1 to 380 (MIISAASDYR…SGDALSRVTR (380 aa)) form the FMN hydroxy acid dehydrogenase domain. Tyr-24 is a binding site for substrate. Residues Ser-106 and Gln-127 each contribute to the FMN site. Tyr-129 contributes to the substrate binding site. Thr-155 serves as a coordination point for FMN. Arg-164 is a substrate binding site. Lys-251 serves as a coordination point for FMN. His-275 serves as the catalytic Proton acceptor. Residue Arg-278 participates in substrate binding. 306–330 (DSGIRSGLDVVRMLALGADAVLLGR) provides a ligand contact to FMN.

The protein belongs to the FMN-dependent alpha-hydroxy acid dehydrogenase family. The cofactor is FMN.

It is found in the cell inner membrane. The catalysed reaction is (S)-lactate + A = pyruvate + AH2. Functionally, catalyzes the conversion of L-lactate to pyruvate. Is coupled to the respiratory chain. The sequence is that of L-lactate dehydrogenase from Xanthomonas campestris pv. campestris (strain B100).